Here is a 379-residue protein sequence, read N- to C-terminus: 1-deoxy-D-xylulose 5-phosphate reductoisomerase (379 aa).

Residues T10, G11, S12, I13, N39, and N121 each contribute to the NADPH site. K122 contacts 1-deoxy-D-xylulose 5-phosphate. E123 provides a ligand contact to NADPH. D147 is a Mn(2+) binding site. Residues S148, E149, S173, and H196 each coordinate 1-deoxy-D-xylulose 5-phosphate. E149 provides a ligand contact to Mn(2+). Residue G202 coordinates NADPH. 4 residues coordinate 1-deoxy-D-xylulose 5-phosphate: S209, N214, K215, and E218. E218 is a binding site for Mn(2+).

Belongs to the DXR family. The cofactor is Mg(2+). Mn(2+) is required as a cofactor.

It carries out the reaction 2-C-methyl-D-erythritol 4-phosphate + NADP(+) = 1-deoxy-D-xylulose 5-phosphate + NADPH + H(+). Its pathway is isoprenoid biosynthesis; isopentenyl diphosphate biosynthesis via DXP pathway; isopentenyl diphosphate from 1-deoxy-D-xylulose 5-phosphate: step 1/6. Catalyzes the NADPH-dependent rearrangement and reduction of 1-deoxy-D-xylulose-5-phosphate (DXP) to 2-C-methyl-D-erythritol 4-phosphate (MEP). This chain is 1-deoxy-D-xylulose 5-phosphate reductoisomerase, found in Chlamydia pneumoniae (Chlamydophila pneumoniae).